The chain runs to 371 residues: Archaeal glycosylation protein Q (371 aa).

Residues 19-39 (QRSDGSMPAGHNGPYHDPETP) are disordered.

The protein resides in the cytoplasm. It participates in cell surface structure biogenesis; S-layer biogenesis. Its function is as follows. Putative isomerase involved in the N-glycosylation pathway. Required for the appearance of the methyl ester of hexuronic acid found at position four of the pentasaccharide N-linked to the S-layer glycoprotein. Either involved in preparing the third sugar for attachment of the fourth pentasaccharide subunit or processing the fourth sugar prior to its addition to the lipid-linked trisaccharide. In Haloferax volcanii (strain ATCC 29605 / DSM 3757 / JCM 8879 / NBRC 14742 / NCIMB 2012 / VKM B-1768 / DS2) (Halobacterium volcanii), this protein is Archaeal glycosylation protein Q (aglQ).